The primary structure comprises 33 residues: Photosystem II reaction center protein Psb30 (33 aa).

A helical transmembrane segment spans residues 5–25 (VIAQLTMLTIAVITGPLVIFF).

This sequence belongs to the Psb30/Ycf12 family. As to quaternary structure, PSII is composed of 1 copy each of membrane proteins PsbA, PsbB, PsbC, PsbD, PsbE, PsbF, PsbH, PsbI, PsbJ, PsbK, PsbL, PsbM, PsbT, PsbX, PsbY, PsbZ, Psb30/Ycf12, peripheral proteins of the oxygen-evolving complex and a large number of cofactors. It forms dimeric complexes.

The protein resides in the plastid. It is found in the chloroplast thylakoid membrane. Functionally, a core subunit of photosystem II (PSII), probably helps stabilize the reaction center. The sequence is that of Photosystem II reaction center protein Psb30 from Welwitschia mirabilis (Tree tumbo).